The chain runs to 425 residues: UPF0229 protein SG1344 (425 aa).

The disordered stretch occupies residues glycine 49–glutamate 109. The segment covering glutamate 50–isoleucine 59 has biased composition (polar residues). Residues proline 77 to arginine 90 are compositionally biased toward basic and acidic residues.

It belongs to the UPF0229 family.

The sequence is that of UPF0229 protein SG1344 from Sodalis glossinidius (strain morsitans).